The following is a 470-amino-acid chain: Protein ASPARTIC PROTEASE IN GUARD CELL 2 (470 aa).

A signal peptide spans 1–19 (MLLPLFFFFLHLHLHLSSS). The 336-residue stretch at 131 to 466 (YFVRIGVGSP…DGANGFVGFG (336 aa)) folds into the Peptidase A1 domain. Aspartate 149 is a catalytic residue. 6 cysteine pairs are disulfide-bonded: cysteine 159-cysteine 162, cysteine 165-cysteine 239, cysteine 186-cysteine 204, cysteine 191-cysteine 199, cysteine 278-cysteine 470, and cysteine 389-cysteine 431. Residue aspartate 350 is part of the active site.

This sequence belongs to the peptidase A1 family.

Aspartic protease that may be involved in drought avoidance through abscisic acid signaling. The chain is Protein ASPARTIC PROTEASE IN GUARD CELL 2 (ASPG2) from Arabidopsis thaliana (Mouse-ear cress).